The following is a 230-amino-acid chain: Orotidine 5'-phosphate decarboxylase (230 aa).

Substrate is bound by residues Asp10, Lys32, 59–68 (DLKYHDIPNT), Thr119, Arg180, Gln189, Gly209, and Arg210. Catalysis depends on Lys61, which acts as the Proton donor.

Belongs to the OMP decarboxylase family. Type 1 subfamily. As to quaternary structure, homodimer.

The catalysed reaction is orotidine 5'-phosphate + H(+) = UMP + CO2. Its pathway is pyrimidine metabolism; UMP biosynthesis via de novo pathway; UMP from orotate: step 2/2. Its function is as follows. Catalyzes the decarboxylation of orotidine 5'-monophosphate (OMP) to uridine 5'-monophosphate (UMP). The sequence is that of Orotidine 5'-phosphate decarboxylase from Glaesserella parasuis serovar 5 (strain SH0165) (Haemophilus parasuis).